The following is a 316-amino-acid chain: Probable cell division protein WhiA (316 aa).

Positions 277-310 (SLEQLGRLADPPITKDAIAGRIRRLLQLAEKTEK) form a DNA-binding region, H-T-H motif.

Belongs to the WhiA family.

In terms of biological role, involved in cell division and chromosome segregation. The sequence is that of Probable cell division protein WhiA from Bifidobacterium adolescentis (strain ATCC 15703 / DSM 20083 / NCTC 11814 / E194a).